Here is a 132-residue protein sequence, read N- to C-terminus: DNA-directed RNA polymerase subunit omega (132 aa).

The tract at residues 100–119 (VSAEEEASHGTAGMSAEELE) is disordered.

This sequence belongs to the RNA polymerase subunit omega family. The RNAP catalytic core consists of 2 alpha, 1 beta, 1 beta' and 1 omega subunit. When a sigma factor is associated with the core the holoenzyme is formed, which can initiate transcription.

The catalysed reaction is RNA(n) + a ribonucleoside 5'-triphosphate = RNA(n+1) + diphosphate. In terms of biological role, promotes RNA polymerase assembly. Latches the N- and C-terminal regions of the beta' subunit thereby facilitating its interaction with the beta and alpha subunits. This Gluconacetobacter diazotrophicus (strain ATCC 49037 / DSM 5601 / CCUG 37298 / CIP 103539 / LMG 7603 / PAl5) protein is DNA-directed RNA polymerase subunit omega.